The sequence spans 140 residues: 3-hydroxyacyl-[acyl-carrier-protein] dehydratase FabZ (140 aa).

Residue His47 is part of the active site.

The protein belongs to the thioester dehydratase family. FabZ subfamily.

It is found in the cytoplasm. The enzyme catalyses a (3R)-hydroxyacyl-[ACP] = a (2E)-enoyl-[ACP] + H2O. In terms of biological role, involved in unsaturated fatty acids biosynthesis. Catalyzes the dehydration of short chain beta-hydroxyacyl-ACPs and long chain saturated and unsaturated beta-hydroxyacyl-ACPs. This chain is 3-hydroxyacyl-[acyl-carrier-protein] dehydratase FabZ, found in Streptococcus mutans serotype c (strain ATCC 700610 / UA159).